Here is a 188-residue protein sequence, read N- to C-terminus: Adenylate kinase (188 aa).

Residue 10–15 (GCGKGT) participates in ATP binding. Residues 30 to 59 (STGDMLRHARAAGTELGRRVAAIMDGGNLV) form an NMP region. AMP is bound by residues Thr-31, Arg-36, 57–59 (NLV), 85–88 (GFPR), and Gln-92. The tract at residues 126 to 136 (KRAEEEGRPDD) is LID. Position 127 (Arg-127) interacts with ATP. 2 residues coordinate AMP: Arg-133 and Arg-144. Residue Gly-172 coordinates ATP.

This sequence belongs to the adenylate kinase family. As to quaternary structure, monomer.

The protein resides in the cytoplasm. The enzyme catalyses AMP + ATP = 2 ADP. It functions in the pathway purine metabolism; AMP biosynthesis via salvage pathway; AMP from ADP: step 1/1. Functionally, catalyzes the reversible transfer of the terminal phosphate group between ATP and AMP. Plays an important role in cellular energy homeostasis and in adenine nucleotide metabolism. The polypeptide is Adenylate kinase (Maricaulis maris (strain MCS10) (Caulobacter maris)).